Consider the following 816-residue polypeptide: Auxin response factor 12 (816 aa).

Residues 1–10 are compositionally biased toward low complexity; the sequence is MSSSSAASIG. The disordered stretch occupies residues 1–24; it reads MSSSSAASIGPPQPPPPPAPPEEE. The span at 11–20 shows a compositional bias: pro residues; the sequence is PPQPPPPPAP. The TF-B3 DNA-binding region spans 135-237; it reads FCKTLTASDT…QLLLGIRRAS (103 aa). Residues 526–565 form a disordered region; it reads NDQKQKIQPDQSYQVPTSAVLPSPTSLPSHLREKFGFSDP. Positions 717-801 constitute a PB1 domain; the sequence is RTFVKVYKSG…WYIKILSPED (85 aa).

It belongs to the ARF family. In terms of assembly, homodimers and heterodimers.

The protein resides in the nucleus. Its function is as follows. Auxin response factors (ARFs) are transcriptional factors that bind specifically to the DNA sequence 5'-TGTCTC-3' found in the auxin-responsive promoter elements (AuxREs). This is Auxin response factor 12 (ARF12) from Oryza sativa subsp. indica (Rice).